We begin with the raw amino-acid sequence, 221 residues long: MASRPLPPGRQEEENAKDSGRKPSPVRPRGCLPSIDEARPAGPGPAPASRRGSMLGLAASFSRRNSLVGPGAGPGGQRPSLGPVPPLGSRVSFSGLPLAPARWVAPSYRTEPVPGERWEAARAQRALEAALAAGLHDACYSSDEAARLVRELCEQVHVRLRELSPPRYKLVCSVVLGPRAGQGVHVVSRALWDVARDGLASVSYTNTSLFAVATVHGLYCE.

Disordered stretches follow at residues 1–52 and 65–87; these read MASR…SRRG and NSLV…VPPL. The segment covering 10–21 has biased composition (basic and acidic residues); it reads RQEEENAKDSGR. S66 is subject to Phosphoserine.

The protein belongs to the dynein light chain Tctex-type family. Interacts with ENG/endoglin, TGFBR2 and TGFBR3. Interacts with PPP1CC. In terms of tissue distribution, ubiquitously expressed. Expressed in testis (at protein level).

The protein resides in the cell projection. It localises to the cilium. The protein localises to the flagellum. It is found in the cytoplasmic vesicle. Its subcellular location is the secretory vesicle. The protein resides in the acrosome. It localises to the cytoplasm. The protein localises to the cytoskeleton. It is found in the cilium axoneme. Its subcellular location is the nucleus. The protein resides in the microtubule organizing center. The sequence is that of Dynein light chain Tctex-type 4 from Homo sapiens (Human).